The primary structure comprises 371 residues: Phospho-N-acetylmuramoyl-pentapeptide-transferase (371 aa).

The next 11 helical transmembrane spans lie at 21 to 41 (NHIL…DFYY), 46 to 66 (LTIP…IGIP), 92 to 112 (PTMG…ILYF), 119 to 139 (IILT…IDDF), 156 to 176 (ILLQ…NNLI), 182 to 202 (IANK…FVLL), 216 to 236 (GLLS…ILIE), 241 to 261 (NSTL…FLFL), 268 to 288 (LFMG…IALI), 296 to 316 (LIMG…VSIF), and 349 to 369 (IVSS…IFLI).

The protein belongs to the glycosyltransferase 4 family. MraY subfamily. It depends on Mg(2+) as a cofactor.

The protein resides in the cell inner membrane. It catalyses the reaction UDP-N-acetyl-alpha-D-muramoyl-L-alanyl-gamma-D-glutamyl-meso-2,6-diaminopimeloyl-D-alanyl-D-alanine + di-trans,octa-cis-undecaprenyl phosphate = di-trans,octa-cis-undecaprenyl diphospho-N-acetyl-alpha-D-muramoyl-L-alanyl-D-glutamyl-meso-2,6-diaminopimeloyl-D-alanyl-D-alanine + UMP. The protein operates within cell wall biogenesis; peptidoglycan biosynthesis. Catalyzes the initial step of the lipid cycle reactions in the biosynthesis of the cell wall peptidoglycan: transfers peptidoglycan precursor phospho-MurNAc-pentapeptide from UDP-MurNAc-pentapeptide onto the lipid carrier undecaprenyl phosphate, yielding undecaprenyl-pyrophosphoryl-MurNAc-pentapeptide, known as lipid I. This chain is Phospho-N-acetylmuramoyl-pentapeptide-transferase, found in Prochlorococcus marinus (strain NATL2A).